The following is a 286-amino-acid chain: 3-hydroxybutyryl-CoA dehydrogenase (286 aa).

Belongs to the 3-hydroxyacyl-CoA dehydrogenase family.

The enzyme catalyses 3-hydroxybutanoyl-CoA + NAD(+) = acetoacetyl-CoA + NADH + H(+). It carries out the reaction (3S)-3-hydroxybutanoyl-CoA + NADP(+) = acetoacetyl-CoA + NADPH + H(+). Its pathway is lipid metabolism; butanoate metabolism. This chain is 3-hydroxybutyryl-CoA dehydrogenase (fadB2), found in Mycobacterium tuberculosis (strain CDC 1551 / Oshkosh).